We begin with the raw amino-acid sequence, 88 residues long: Meiosis-expressed gene 1 protein (88 aa).

Belongs to the MEIG1 family. In terms of assembly, interacts with PACRG. Interacts with MORN3. As to expression, expressed in the testes (at protein level). Expressed in the ovary. Several isoforms have been identified differing in their 5'-untranslated exons. These isoforms show different tissue expression. Some are expressed in various tissues, including lung, liver, brain, testis, oviduct and oocytes. Some are testis-specific.

Essential for spermiogenesis. The chain is Meiosis-expressed gene 1 protein from Mus musculus (Mouse).